A 127-amino-acid polypeptide reads, in one-letter code: MRKPRVTLRHLAWSTMLLMVLGTGMLFWSAVRQQESTLAIRSIHQGASMPDGFSIWHHLDAHGIRFKSITPENDTLLITFDSSAQSAAAKAVLDKTLPRGYIIAQRENASQAVQWLSRLRDAPHRMG.

The Cytoplasmic portion of the chain corresponds to M1–L11. A helical membrane pass occupies residues A12–V31. Topologically, residues R32–G127 are periplasmic.

The protein belongs to the MzrA family. Interacts with EnvZ.

It localises to the cell inner membrane. In terms of biological role, modulates the activity of the EnvZ/OmpR two-component regulatory system, probably by directly modulating EnvZ enzymatic activity and increasing stability of phosphorylated OmpR. The protein is Modulator protein MzrA of Citrobacter rodentium (strain ICC168) (Citrobacter freundii biotype 4280).